The following is a 190-amino-acid chain: UPF0301 protein RSc0675 (190 aa).

It belongs to the UPF0301 (AlgH) family.

The polypeptide is UPF0301 protein RSc0675 (Ralstonia nicotianae (strain ATCC BAA-1114 / GMI1000) (Ralstonia solanacearum)).